The sequence spans 351 residues: Leukotriene B4 receptor 1 (351 aa).

Over 1-21 the chain is Extracellular; sequence MAANTTSPAAPSSPGGMSLSL. N-linked (GlcNAc...) asparagine glycosylation occurs at N4. Residues 22-44 traverse the membrane as a helical segment; that stretch reads LPIVLLSVALAVGLPGNSFVVWS. Over 45-56 the chain is Cytoplasmic; the sequence is ILKRMQKRTVTA. Residues 57–77 form a helical membrane-spanning segment; sequence LLVLNLALADLAVLLTAPFFL. The Extracellular segment spans residues 78 to 93; the sequence is HFLARGTWSFREMGCR. The helical transmembrane segment at 94–115 threads the bilayer; the sequence is LCHYVCGISMYASVLLITIMSL. The Cytoplasmic portion of the chain corresponds to 116–140; sequence DRSLAVARPFMSQKVRTKAFARWVL. The chain crosses the membrane as a helical span at residues 141–161; the sequence is AGIWVVSFLLAIPVLVYRTVK. At 162-179 the chain is on the extracellular side; the sequence is WNNRTLICAPNYPNKEHK. N164 carries N-linked (GlcNAc...) asparagine glycosylation. The helical transmembrane segment at 180 to 200 threads the bilayer; that stretch reads VFHLLFEAITGFLLPFLAVVA. Over 201 to 222 the chain is Cytoplasmic; sequence SYSDIGRRLQARRFRRSRRTGR. The helical transmembrane segment at 223–243 threads the bilayer; sequence LVVLIILAFAAFWLPYHLVNL. The Extracellular segment spans residues 244–268; sequence VEAGRTVAGWDKNSPAGQRLRLARY. The helical transmembrane segment at 269 to 289 threads the bilayer; the sequence is VLIALAFLSSSVNPVLYACAG. Over 290 to 351 the chain is Cytoplasmic; sequence GGLLRSAGVG…TSSTIPESSK (62 aa). 2 stretches are compositionally biased toward polar residues: residues 311-326 and 339-351; these read EVSS…QTPK and SFMT…ESSK. A disordered region spans residues 311–351; it reads EVSSTRRGGTLVQTPKDTPACPEPGPTDSFMTSSTIPESSK.

Belongs to the G-protein coupled receptor 1 family. Post-translationally, phosphorylated by GRK6 upon leukotriene B4 binding; which promotes desensitization. As to expression, highly expressed on activated leukocytes, including eosinophils.

It is found in the cell membrane. Its function is as follows. Receptor for leukotriene B4, a potent chemoattractant involved in inflammation and immune response. The chain is Leukotriene B4 receptor 1 (Ltb4r) from Mus musculus (Mouse).